Reading from the N-terminus, the 834-residue chain is Membrane-associated lipoprotein (834 aa).

An N-terminal signal peptide occupies residues M1 to S25. C26 carries the N-palmitoyl cysteine lipid modification. The S-diacylglycerol cysteine moiety is linked to residue C26. Residues R143–N237 form the Lipoprotein-associated type-17 domain.

The protein localises to the cell membrane. The protein is Membrane-associated lipoprotein of Ureaplasma parvum serovar 3 (strain ATCC 700970).